The sequence spans 561 residues: Efflux pump bfoC (561 aa).

Positions 1–55 (MSDTARILGGPSASSSRDGGMELNSFTEVSQTNSRSHSTKEEEGQVDDQQRPARE) are disordered. Positions 24 to 36 (NSFTEVSQTNSRS) are enriched in polar residues. Positions 38-55 (STKEEEGQVDDQQRPARE) are enriched in basic and acidic residues. The next 13 helical transmembrane spans lie at 59–79 (GVLGGYKLVLVTIGLCFCIFC), 103–123 (DVGWYASAYLLTTCAVTLTFG), 128–148 (FFPIKWVYLSALLIFELGSFI), 164–184 (VAGLGGGGLLSGSLLIISQCV), 194–214 (GFIMSIFAVASVIAPLMGGAF), 222–242 (WCFYINLPFGLVSAVVILFTF), 257–277 (AVGLDPLGTATFLPGIVCLLL), 293–313 (VVALFVLFGVLLVCFIGLQLW), 335–355 (LYGFCLNGAMFTFVYYLPIWF), 378–398 (VVFAIISGVLVSMTGYLGPFM), 425–445 (IGYQVLLGLSIGVGFQVPIFV), 457–477 (TATALMTFIQLLGGAIFVSVA), and 530–550 (VHTFYLAIGLAAASFLAATVI).

It belongs to the major facilitator superfamily. TCR/Tet family.

The protein resides in the cell membrane. Its function is as follows. Efflux pump; part of the gene cluster that mediates the biosynthesis of bifonsecin B, a dimeric gamma-naphthopyrone. In Aspergillus brasiliensis (strain CBS 101740 / IMI 381727 / IBT 21946), this protein is Efflux pump bfoC.